The primary structure comprises 2614 residues: Talin-B (2614 aa).

One can recognise an FERM domain in the interval 85 to 369 (RPLKVRLMDE…GYIEILMKKR (285 aa)). Residues 393–421 (RGQTSQATTSSSLSGYDGNGGREGQYSAP) are disordered. Residues 395 to 406 (QTSQATTSSSLS) are compositionally biased toward low complexity. Coiled coils occupy residues 1938–1965 (TQNI…ASGK) and 2033–2057 (NKAI…LVQS). Residues 2219 to 2460 (LLFAAGESLE…SIRKKEYSDQ (242 aa)) form the I/LWEQ domain. Positions 2454 to 2557 (KKEYSDQTGN…AAPTAAAPNK (104 aa)) are disordered. The segment covering 2473-2487 (KPTTSISVGITPTKR) has biased composition (polar residues). Low complexity predominate over residues 2517 to 2537 (KKPAPSQAPSSPVAPVSAPVS). Positions 2538-2548 (KPSPKPAPKPA) are enriched in pro residues. One can recognise an HP domain in the interval 2553-2614 (AAPNKTYTLE…NNIKTKLGLF (62 aa)).

Its subcellular location is the cytoplasm. It is found in the cytoskeleton. The protein resides in the cell cortex. Actin-binding protein required for multicellular morphogenesis. Substrate of pkgB and/or pkbA. The polypeptide is Talin-B (talB) (Dictyostelium discoideum (Social amoeba)).